A 458-amino-acid polypeptide reads, in one-letter code: tRNA modification GTPase MnmE (458 aa).

Residues arginine 22, glutamate 85, and arginine 124 each contribute to the (6S)-5-formyl-5,6,7,8-tetrahydrofolate site. The TrmE-type G domain occupies 220-379 (GLATAIIGRP…LEEAISRLFF (160 aa)). Asparagine 230 contacts K(+). GTP is bound by residues 230–235 (NVGKSS), 249–255 (TDIPGTT), and 274–277 (DTAG). Serine 234 provides a ligand contact to Mg(2+). Positions 249, 251, and 254 each coordinate K(+). Threonine 255 is a Mg(2+) binding site. Lysine 458 serves as a coordination point for (6S)-5-formyl-5,6,7,8-tetrahydrofolate.

Belongs to the TRAFAC class TrmE-Era-EngA-EngB-Septin-like GTPase superfamily. TrmE GTPase family. As to quaternary structure, homodimer. Heterotetramer of two MnmE and two MnmG subunits. The cofactor is K(+).

It is found in the cytoplasm. Exhibits a very high intrinsic GTPase hydrolysis rate. Involved in the addition of a carboxymethylaminomethyl (cmnm) group at the wobble position (U34) of certain tRNAs, forming tRNA-cmnm(5)s(2)U34. In Shouchella clausii (strain KSM-K16) (Alkalihalobacillus clausii), this protein is tRNA modification GTPase MnmE.